Reading from the N-terminus, the 275-residue chain is Large ribosomal subunit protein uL2 (275 aa).

Disordered regions lie at residues 24-47 (IHKGSPHASLLESQSKTGGRNHHG) and 227-261 (PVDHPHGGGEAKSGQGNPHPVTPWGVPTKGYKTRK).

It belongs to the universal ribosomal protein uL2 family. In terms of assembly, part of the 50S ribosomal subunit. Forms a bridge to the 30S subunit in the 70S ribosome.

Its function is as follows. One of the primary rRNA binding proteins. Required for association of the 30S and 50S subunits to form the 70S ribosome, for tRNA binding and peptide bond formation. It has been suggested to have peptidyltransferase activity; this is somewhat controversial. Makes several contacts with the 16S rRNA in the 70S ribosome. The chain is Large ribosomal subunit protein uL2 from Xylella fastidiosa (strain M12).